Reading from the N-terminus, the 482-residue chain is UDP-N-acetylmuramate--L-alanine ligase (482 aa).

Residue 122-128 (GTHGKTT) coordinates ATP.

This sequence belongs to the MurCDEF family.

The protein localises to the cytoplasm. The enzyme catalyses UDP-N-acetyl-alpha-D-muramate + L-alanine + ATP = UDP-N-acetyl-alpha-D-muramoyl-L-alanine + ADP + phosphate + H(+). Its pathway is cell wall biogenesis; peptidoglycan biosynthesis. Functionally, cell wall formation. The protein is UDP-N-acetylmuramate--L-alanine ligase of Mycolicibacterium smegmatis (strain ATCC 700084 / mc(2)155) (Mycobacterium smegmatis).